The sequence spans 474 residues: Bifunctional protein HldE (474 aa).

The segment at 1-318 (MKLSMPRFDQ…RAVQREQGSE (318 aa)) is ribokinase. 194 to 197 (NLSE) is a binding site for ATP. Asp263 is an active-site residue. Residues 343–474 (FTNGCFDILH…AIVEKIRQKG (132 aa)) are cytidylyltransferase.

This sequence in the N-terminal section; belongs to the carbohydrate kinase PfkB family. In the C-terminal section; belongs to the cytidylyltransferase family. As to quaternary structure, homodimer.

The enzyme catalyses D-glycero-beta-D-manno-heptose 7-phosphate + ATP = D-glycero-beta-D-manno-heptose 1,7-bisphosphate + ADP + H(+). It catalyses the reaction D-glycero-beta-D-manno-heptose 1-phosphate + ATP + H(+) = ADP-D-glycero-beta-D-manno-heptose + diphosphate. It participates in nucleotide-sugar biosynthesis; ADP-L-glycero-beta-D-manno-heptose biosynthesis; ADP-L-glycero-beta-D-manno-heptose from D-glycero-beta-D-manno-heptose 7-phosphate: step 1/4. Its pathway is nucleotide-sugar biosynthesis; ADP-L-glycero-beta-D-manno-heptose biosynthesis; ADP-L-glycero-beta-D-manno-heptose from D-glycero-beta-D-manno-heptose 7-phosphate: step 3/4. Functionally, catalyzes the phosphorylation of D-glycero-D-manno-heptose 7-phosphate at the C-1 position to selectively form D-glycero-beta-D-manno-heptose-1,7-bisphosphate. In terms of biological role, catalyzes the ADP transfer from ATP to D-glycero-beta-D-manno-heptose 1-phosphate, yielding ADP-D-glycero-beta-D-manno-heptose. This is Bifunctional protein HldE from Pseudomonas aeruginosa (strain UCBPP-PA14).